A 221-amino-acid chain; its full sequence is Deoxyribose-phosphate aldolase (221 aa).

The active-site Proton donor/acceptor is the aspartate 91. Lysine 153 functions as the Schiff-base intermediate with acetaldehyde in the catalytic mechanism. Lysine 182 functions as the Proton donor/acceptor in the catalytic mechanism.

It belongs to the DeoC/FbaB aldolase family. DeoC type 1 subfamily.

It localises to the cytoplasm. The enzyme catalyses 2-deoxy-D-ribose 5-phosphate = D-glyceraldehyde 3-phosphate + acetaldehyde. The protein operates within carbohydrate degradation; 2-deoxy-D-ribose 1-phosphate degradation; D-glyceraldehyde 3-phosphate and acetaldehyde from 2-deoxy-alpha-D-ribose 1-phosphate: step 2/2. Its function is as follows. Catalyzes a reversible aldol reaction between acetaldehyde and D-glyceraldehyde 3-phosphate to generate 2-deoxy-D-ribose 5-phosphate. The sequence is that of Deoxyribose-phosphate aldolase from Clostridium botulinum (strain Eklund 17B / Type B).